Reading from the N-terminus, the 274-residue chain is Thymidylate synthase (274 aa).

Position 21 (Arg-21) interacts with dUMP. A (6R)-5,10-methylene-5,6,7,8-tetrahydrofolate-binding site is contributed by His-51. 123 to 124 provides a ligand contact to dUMP; the sequence is RR. Cys-156 (nucleophile) is an active-site residue. Residues 176–179, Asn-187, and 217–219 each bind dUMP; these read RSAD and HIY. Residue Asp-179 coordinates (6R)-5,10-methylene-5,6,7,8-tetrahydrofolate. Ser-273 contacts (6R)-5,10-methylene-5,6,7,8-tetrahydrofolate.

The protein belongs to the thymidylate synthase family. Bacterial-type ThyA subfamily. Homodimer.

It is found in the cytoplasm. It catalyses the reaction dUMP + (6R)-5,10-methylene-5,6,7,8-tetrahydrofolate = 7,8-dihydrofolate + dTMP. The protein operates within pyrimidine metabolism; dTTP biosynthesis. Catalyzes the reductive methylation of 2'-deoxyuridine-5'-monophosphate (dUMP) to 2'-deoxythymidine-5'-monophosphate (dTMP) while utilizing 5,10-methylenetetrahydrofolate (mTHF) as the methyl donor and reductant in the reaction, yielding dihydrofolate (DHF) as a by-product. This enzymatic reaction provides an intracellular de novo source of dTMP, an essential precursor for DNA biosynthesis. This is Thymidylate synthase from Francisella tularensis subsp. tularensis (strain SCHU S4 / Schu 4).